Reading from the N-terminus, the 68-residue chain is Amphipathic peptide VmCT1 (68 aa).

The first 23 residues, methionine 1 to alanine 23, serve as a signal peptide directing secretion. Phenylalanine 36 carries the phenylalanine amide modification. The propeptide occupies glycine 40 to arginine 68.

Belongs to the non-disulfide-bridged peptide (NDBP) superfamily. Short antimicrobial peptide (group 4) family. Expressed by the venom gland.

Its subcellular location is the secreted. The protein localises to the target cell membrane. Functionally, cationic amphipathic peptide with antibacterial activities against both Gram-positive and Gram-negative bacteria. Also shows antifungal activities. Is mildly hemolytic against human erythrocytes. In addition, when tested in vitro on the parasite Trypanosoma cruzi (responsible of the Chagas disease), is able to reduce the number of the three forms (epimastigote, trypomastigote and amastigote). Also shows antiplasmodial and cytotoxic activity (tested on Plasmodium gallinaceum, and MCF-7 breast cancer cell line). The polypeptide is Amphipathic peptide VmCT1 (Vaejovis mexicanus smithi (Mexican scorpion)).